We begin with the raw amino-acid sequence, 157 residues long: MEKVPMTTAGFESLKEELRWRQQEERPRIIEAISEARAHGDLSGNAEYHAAKEAQSHNEGRINELEDYIARAEVINVSRLSGDKIKFGATIKLLDEDTEEKKVYQIVGDQEADVKTGKISISSPIARALIGKQEGDVIEVNAPGGAHNYEIIEVQYI.

This sequence belongs to the GreA/GreB family.

In terms of biological role, necessary for efficient RNA polymerase transcription elongation past template-encoded arresting sites. The arresting sites in DNA have the property of trapping a certain fraction of elongating RNA polymerases that pass through, resulting in locked ternary complexes. Cleavage of the nascent transcript by cleavage factors such as GreA or GreB allows the resumption of elongation from the new 3'terminus. GreA releases sequences of 2 to 3 nucleotides. The polypeptide is Transcription elongation factor GreA (Bartonella henselae (strain ATCC 49882 / DSM 28221 / CCUG 30454 / Houston 1) (Rochalimaea henselae)).